Consider the following 348-residue polypeptide: Ketol-acid reductoisomerase (NADP(+)) (348 aa).

A KARI N-terminal Rossmann domain is found at 1–179 (MDVHYDADPA…GGTHAGVIET (179 aa)). NADP(+)-binding positions include 22–25 (YGSQ), Arg-45, Ser-48, Ser-50, and 80–83 (DQHQ). The active site involves His-105. Gly-131 contacts NADP(+). The region spanning 180 to 325 (TFKDETETDL…QTLRGMMPWL (146 aa)) is the KARI C-terminal knotted domain. Mg(2+) contacts are provided by Asp-188, Glu-192, Glu-224, and Glu-228. Ser-249 is a substrate binding site. The disordered stretch occupies residues 323 to 348 (PWLNGDETSADEDAPDAADTAPASSS). Residues 339–348 (AADTAPASSS) show a composition bias toward low complexity.

This sequence belongs to the ketol-acid reductoisomerase family. Requires Mg(2+) as cofactor.

It carries out the reaction (2R)-2,3-dihydroxy-3-methylbutanoate + NADP(+) = (2S)-2-acetolactate + NADPH + H(+). The enzyme catalyses (2R,3R)-2,3-dihydroxy-3-methylpentanoate + NADP(+) = (S)-2-ethyl-2-hydroxy-3-oxobutanoate + NADPH + H(+). It participates in amino-acid biosynthesis; L-isoleucine biosynthesis; L-isoleucine from 2-oxobutanoate: step 2/4. It functions in the pathway amino-acid biosynthesis; L-valine biosynthesis; L-valine from pyruvate: step 2/4. In terms of biological role, involved in the biosynthesis of branched-chain amino acids (BCAA). Catalyzes an alkyl-migration followed by a ketol-acid reduction of (S)-2-acetolactate (S2AL) to yield (R)-2,3-dihydroxy-isovalerate. In the isomerase reaction, S2AL is rearranged via a Mg-dependent methyl migration to produce 3-hydroxy-3-methyl-2-ketobutyrate (HMKB). In the reductase reaction, this 2-ketoacid undergoes a metal-dependent reduction by NADPH to yield (R)-2,3-dihydroxy-isovalerate. This is Ketol-acid reductoisomerase (NADP(+)) from Salinibacter ruber (strain DSM 13855 / M31).